Here is a 352-residue protein sequence, read N- to C-terminus: C-C chemokine receptor type 5 (352 aa).

Topologically, residues 1 to 30 (MDYQVSSPTYDIDYYTSEPCQKINVKQIAA) are extracellular. Tyrosine 3 carries the sulfotyrosine modification. Serine 6 and serine 7 each carry an O-linked (GalNAc...) serine glycan. Sulfotyrosine is present on residues tyrosine 10, tyrosine 14, and tyrosine 15. 2 disulfide bridges follow: cysteine 20/cysteine 269 and cysteine 101/cysteine 178. A helical transmembrane segment spans residues 31–58 (RLLPPLYSLVFIFGFVGNILVVLILINC). Residues 59-68 (KRLKSMTDIY) lie on the Cytoplasmic side of the membrane. The helical transmembrane segment at 69–89 (LLNLAISDLLFLLTVPFWAHY) threads the bilayer. At 90 to 102 (AAAQWDFGNTMCQ) the chain is on the extracellular side. The chain crosses the membrane as a helical span at residues 103 to 124 (LLTGLYFIGFFSGIFFIILLTI). At 125 to 141 (DRYLAIVHAVFALKART) the chain is on the cytoplasmic side. A helical membrane pass occupies residues 142–166 (VTFGVVTSVITWVVAVFASLPGIIF). Residues 167 to 198 (TRSQREGLHYTCSSHFPYSQYQFWKNFQTLKM) are Extracellular-facing. A helical transmembrane segment spans residues 199–218 (VILGLVLPLLVMVICYSGIL). Residues 219-235 (KTLLRCRNEKKRHRAVR) lie on the Cytoplasmic side of the membrane. A helical membrane pass occupies residues 236-260 (LIFTIMIVYFLFWAPYNIVLLLNTF). Over 261 to 277 (QEFFGLNNCSSSNRLDQ) the chain is Extracellular. Residues 278–301 (AMQVTETLGMTHCCINPIIYAFVG) form a helical membrane-spanning segment. Residues 302–352 (EKFRNYLLVFFQKHIAKRFCKCCSIFQQEAPERASSVYTRSTGEQEISVGL) lie on the Cytoplasmic side of the membrane. 3 S-palmitoyl cysteine lipidation sites follow: cysteine 321, cysteine 323, and cysteine 324. 4 positions are modified to phosphoserine; by BARK1: serine 336, serine 337, serine 342, and serine 349.

It belongs to the G-protein coupled receptor 1 family. Interacts with PRAF2. Efficient ligand binding to CCL3/MIP-1alpha and CCL4/MIP-1beta requires sulfation, O-glycosylation and sialic acid modifications. Glycosylation on Ser-6 is required for efficient binding of CCL4. Interacts with GRK2. Interacts with ARRB1 and ARRB2. Interacts with CNIH4. Interacts with S100A4; this interaction stimulates T-lymphocyte chemotaxis. Sulfated on at least 2 of the N-terminal tyrosines. Sulfation is required for efficient binding of the chemokines, CCL3 and CCL4. In terms of processing, palmitoylation in the C-terminal is important for cell surface expression. Post-translationally, phosphorylation on serine residues in the C-terminal is stimulated by binding CC chemokines especially by APO-RANTES. O-glycosylated, but not N-glycosylated. Ser-6 appears to be the major site even if Ser-7 may be also O-glycosylated. Also sialylated glycans present which contribute to chemokine binding. Thr-16 and Ser-17 may also be glycosylated and, if so, with small moieties such as a T-antigen.

It is found in the cell membrane. Functionally, receptor for a number of inflammatory CC-chemokines including CCL3/MIP-1-alpha, CCL4/MIP-1-beta and RANTES and subsequently transduces a signal by increasing the intracellular calcium ion level. May play a role in the control of granulocytic lineage proliferation or differentiation. Participates in T-lymphocyte migration to the infection site by acting as a chemotactic receptor. This is C-C chemokine receptor type 5 (CCR5) from Macaca fascicularis (Crab-eating macaque).